Here is a 275-residue protein sequence, read N- to C-terminus: Phosphate import ATP-binding protein PstB 3 (275 aa).

Residues 1 to 26 form a disordered region; the sequence is MATQETDDSLISTDVQTDATERGDQP. Residues 9–18 show a composition bias toward polar residues; it reads SLISTDVQTD. One can recognise an ABC transporter domain in the interval 31-270; sequence VETKHLDVHY…PEDDRVEDYI (240 aa). 63–70 is an ATP binding site; it reads GPSGCGKS.

It belongs to the ABC transporter superfamily. Phosphate importer (TC 3.A.1.7) family. In terms of assembly, the complex is composed of two ATP-binding proteins (PstB), two transmembrane proteins (PstC and PstA) and a solute-binding protein (PstS).

It is found in the cell membrane. The catalysed reaction is phosphate(out) + ATP + H2O = ADP + 2 phosphate(in) + H(+). In terms of biological role, part of the ABC transporter complex PstSACB involved in phosphate import. Responsible for energy coupling to the transport system. This Natronomonas pharaonis (strain ATCC 35678 / DSM 2160 / CIP 103997 / JCM 8858 / NBRC 14720 / NCIMB 2260 / Gabara) (Halobacterium pharaonis) protein is Phosphate import ATP-binding protein PstB 3.